The following is a 252-amino-acid chain: Triosephosphate isomerase (252 aa).

10–12 (NWK) contributes to the substrate binding site. The active-site Electrophile is histidine 96. The active-site Proton acceptor is the glutamate 168. Substrate is bound by residues glycine 174, serine 214, and 235-236 (GG).

It belongs to the triosephosphate isomerase family. In terms of assembly, homodimer.

Its subcellular location is the cytoplasm. The catalysed reaction is D-glyceraldehyde 3-phosphate = dihydroxyacetone phosphate. It functions in the pathway carbohydrate biosynthesis; gluconeogenesis. It participates in carbohydrate degradation; glycolysis; D-glyceraldehyde 3-phosphate from glycerone phosphate: step 1/1. In terms of biological role, involved in the gluconeogenesis. Catalyzes stereospecifically the conversion of dihydroxyacetone phosphate (DHAP) to D-glyceraldehyde-3-phosphate (G3P). In Streptococcus pyogenes serotype M6 (strain ATCC BAA-946 / MGAS10394), this protein is Triosephosphate isomerase.